A 98-amino-acid polypeptide reads, in one-letter code: NADH-ubiquinone oxidoreductase chain 4L (98 aa).

Helical transmembrane passes span 1-21 (MASI…GVLI), 28-48 (STLL…TLLI), and 61-81 (LILL…LVTI).

Belongs to the complex I subunit 4L family. Core subunit of respiratory chain NADH dehydrogenase (Complex I) which is composed of 45 different subunits.

Its subcellular location is the mitochondrion inner membrane. The catalysed reaction is a ubiquinone + NADH + 5 H(+)(in) = a ubiquinol + NAD(+) + 4 H(+)(out). In terms of biological role, core subunit of the mitochondrial membrane respiratory chain NADH dehydrogenase (Complex I) which catalyzes electron transfer from NADH through the respiratory chain, using ubiquinone as an electron acceptor. Part of the enzyme membrane arm which is embedded in the lipid bilayer and involved in proton translocation. The protein is NADH-ubiquinone oxidoreductase chain 4L (MT-ND4L) of Thylamys elegans (Elegant fat-tailed mouse opossum).